The chain runs to 1819 residues: Non-reducing polyketide synthase 8 (1819 aa).

The Starter acyltransferase (SAT) domain occupies Gln38–Gly265. In terms of domain architecture, Ketosynthase family 3 (KS3) spans Lys405–Glu840. Catalysis depends on for beta-ketoacyl synthase activity residues Cys578, His714, and His758. The 320-residue stretch at Phe943 to Ala1262 folds into the Malonyl-CoA:ACP transacylase (MAT) domain. Residues Gln1336–Trp1476 form an N-terminal hotdog fold region. Residues Gln1336–Asn1646 enclose the PKS/mFAS DH domain. The active-site Proton acceptor; for dehydratase activity is the His1368. The dehydratase (DH) domain stretch occupies residues Ala1404–Arg1642. The interval Ile1498–Asn1646 is C-terminal hotdog fold. Catalysis depends on Asp1557, which acts as the Proton donor; for dehydratase activity. Positions Val1741–Tyr1818 constitute a Carrier domain. Residue Ser1778 is modified to O-(pantetheine 4'-phosphoryl)serine.

Requires pantetheine 4'-phosphate as cofactor.

The protein operates within secondary metabolite biosynthesis. In terms of biological role, non-reducing polyketide synthase; part of the gene cluster that mediates the biosynthesis of dibenzodioxocinones such as pestalotiollide B, a novel class of inhibitors against cholesterol ester transfer protein (CEPT). The biosynthesis initiates from condensation of acetate and malonate units catalyzed by the non-reducing PKS pks8/GME11356. Pks8/GME11356 lacks a thioesterase (TE) domain, which is important to the cyclizing of the third ring of atrochrysone carboxylic acid, and the esterase GME11355 might play the role of TE and catalyzes the cyclization reaction of the C ring. The lactamase-like protein GME11357 (or other beta-lactamases in Pestalotiopsis microspora) probably hydrolyzes the thioester bond between the ACP of pks8/GME11356 and the intermediate to release atrochrysone carboxylic acid, which is spontaneously dehydrates to form endocrocin anthrone. Endocrocin anthrone is further converted to emodin via the endocrocin intermediate. Emodin is then oxidized by several enzymes such as the Baeyer-Villiger oxidase GME11358, the oxidoreductase GME11367, the short chain dehydrogenase/reductase GME11373, as well as by other oxidoreductases from the cluster, to modify the A and C rings and open the B ring, and finally yield monodictyphenone. The prenyltransferase GME11375 may catalyze the addition reaction between the C5 side chains and the carbon bone of dibenzodioxocinones. The remaining biochemical reactions to the final product dibenzodioxocinones should be methylation catalyzed by methyltransferase GME11366 and reduction and lactonization reaction catalyzed by a series of oxidordeuctases. This Pestalotiopsis microspora protein is Non-reducing polyketide synthase 8.